The following is a 507-amino-acid chain: Glycerol kinase 2 (507 aa).

ADP is bound at residue Thr-16. ATP contacts are provided by Thr-16, Thr-17, and Ser-18. Thr-16 contacts sn-glycerol 3-phosphate. Residue Arg-20 coordinates ADP. Sn-glycerol 3-phosphate is bound by residues Arg-86, Glu-87, Tyr-138, and Asp-248. 5 residues coordinate glycerol: Arg-86, Glu-87, Tyr-138, Asp-248, and Gln-249. Positions 270 and 314 each coordinate ADP. ATP contacts are provided by Thr-270, Gly-314, Gln-318, and Gly-415. ADP-binding residues include Gly-415 and Asn-419.

It belongs to the FGGY kinase family.

It catalyses the reaction glycerol + ATP = sn-glycerol 3-phosphate + ADP + H(+). It participates in polyol metabolism; glycerol degradation via glycerol kinase pathway; sn-glycerol 3-phosphate from glycerol: step 1/1. With respect to regulation, inhibited by fructose 1,6-bisphosphate (FBP). Key enzyme in the regulation of glycerol uptake and metabolism. Catalyzes the phosphorylation of glycerol to yield sn-glycerol 3-phosphate. The sequence is that of Glycerol kinase 2 from Streptomyces avermitilis (strain ATCC 31267 / DSM 46492 / JCM 5070 / NBRC 14893 / NCIMB 12804 / NRRL 8165 / MA-4680).